The chain runs to 368 residues: Flagellar P-ring protein (368 aa).

Residues 1 to 24 (MNSIFRKIVFAAFLLLALPQFALA) form the signal peptide.

The protein belongs to the FlgI family. The basal body constitutes a major portion of the flagellar organelle and consists of four rings (L,P,S, and M) mounted on a central rod.

It localises to the periplasm. The protein resides in the bacterial flagellum basal body. In terms of biological role, assembles around the rod to form the L-ring and probably protects the motor/basal body from shearing forces during rotation. This chain is Flagellar P-ring protein, found in Geotalea uraniireducens (strain Rf4) (Geobacter uraniireducens).